The primary structure comprises 130 residues: Ornithine decarboxylase antizyme (130 aa).

The span at 1 to 14 (SDVPVHHRTDHDRA) shows a compositional bias: basic and acidic residues. The interval 1-56 (SDVPVHHRTDHDRASLLTGSSRKSSVDSAGGSLFEASSRASSPSSSSSSECSDTES) is disordered. The segment covering 17 to 27 (LTGSSRKSSVD) has biased composition (polar residues). The span at 32–51 (SLFEASSRASSPSSSSSSEC) shows a compositional bias: low complexity.

It belongs to the ODC antizyme family. As to quaternary structure, interacts with ODC1 and thereby sterically blocks ODC homodimerization.

Functionally, ornithine decarboxylase (ODC) antizyme protein that negatively regulates ODC activity and intracellular polyamine biosynthesis and uptake in response to increased intracellular polyamine levels. Binds to ODC monomers, inhibiting the assembly of the functional ODC homodimer, and targets the monomers for ubiquitin-independent proteolytic destruction by the 26S proteasome. This is Ornithine decarboxylase antizyme (Oda) from Drosophila virilis (Fruit fly).